Reading from the N-terminus, the 318-residue chain is Endochitinase 1 (318 aa).

An N-terminal signal peptide occupies residues 1–18 (EFTTLFLLFSVLLLSASA). Residues 19 to 60 (EQCGSQAGGALCASGLCCSKFGWCGDTNDYCGPGNCQSQCPG) enclose the Chitin-binding type-1 domain. 7 cysteine pairs are disulfide-bonded: C21-C36, C30-C42, C35-C49, C54-C58, C89-C152, C164-C172, and C271-C303. E134 acts as the Proton donor in catalysis. Positions 312 to 318 (GLLVDTM) are cleaved as a propeptide — removed in mature form, vacuolar targeting.

It belongs to the glycosyl hydrolase 19 family. Chitinase class I subfamily.

The protein resides in the vacuole. It carries out the reaction Random endo-hydrolysis of N-acetyl-beta-D-glucosaminide (1-&gt;4)-beta-linkages in chitin and chitodextrins.. Defense against chitin-containing fungal pathogens. This Solanum tuberosum (Potato) protein is Endochitinase 1 (CHTB1).